The sequence spans 134 residues: Transcription antitermination protein NusB (134 aa).

This sequence belongs to the NusB family.

Involved in transcription antitermination. Required for transcription of ribosomal RNA (rRNA) genes. Binds specifically to the boxA antiterminator sequence of the ribosomal RNA (rrn) operons. The sequence is that of Transcription antitermination protein NusB from Shewanella frigidimarina (strain NCIMB 400).